Here is a 466-residue protein sequence, read N- to C-terminus: Asparagine--tRNA ligase (466 aa).

The protein belongs to the class-II aminoacyl-tRNA synthetase family. In terms of assembly, homodimer.

The protein localises to the cytoplasm. The catalysed reaction is tRNA(Asn) + L-asparagine + ATP = L-asparaginyl-tRNA(Asn) + AMP + diphosphate + H(+). This Escherichia coli O139:H28 (strain E24377A / ETEC) protein is Asparagine--tRNA ligase.